Consider the following 859-residue polypeptide: ATP-dependent RNA helicase DDX24 (859 aa).

Lys17 carries the N6-acetyllysine modification. Position 60 is a phosphoserine (Ser60). Positions 61–170 (PAKNPSSLFS…KGLEPSQSTA (110 aa)) are disordered. Lys71 is subject to N6-acetyllysine. Phosphoserine occurs at positions 82 and 94. Residues 94 to 105 (SPKKKIKLKKSK) show a composition bias toward basic residues. Polar residues predominate over residues 106-115 (NVATEGTSTQ). Positions 125-139 (LEAQGDDMVCDDPEA) are enriched in acidic residues. The Q motif motif lies at 192–220 (SAWKDLFVPRPVLRALSFLGFSAPTPIQA). The Helicase ATP-binding domain maps to 224-528 (APAIRDKLDI…RILHKKHTKK (305 aa)). 237 to 244 (AETGSGKT) contacts ATP. The interval 262–300 (NAAPPPSNTEAPPGETRTEAGAETRSPGKAEAESDALPD) is disordered. The span at 277–293 (TRTEAGAETRSPGKAEA) shows a compositional bias: basic and acidic residues. Phosphoserine occurs at positions 287 and 295. Thr302 is subject to Phosphothreonine. The interval 326–376 (SDQALLFGDDDAGEGPSSLIREKPVPKQNENEEENLDKEQTGNLKQELDDK) is disordered. Lys370 is covalently cross-linked (Glycyl lysine isopeptide (Lys-Gly) (interchain with G-Cter in SUMO2)). The DEAD box motif lies at 471–474 (DEAD). The Helicase C-terminal domain occupies 578 to 723 (YLYYFLMQYP…LFPVQTKYMD (146 aa)). Glycyl lysine isopeptide (Lys-Gly) (interchain with G-Cter in SUMO2) cross-links involve residues Lys624, Lys808, and Lys825. Polar residues-rich tracts occupy residues 799-814 (PLFT…TQSG) and 823-833 (PSKSESALSCL). Residues 799-859 (PLFTESQKTK…EQPQPSTSAN (61 aa)) form a disordered region.

It belongs to the DEAD box helicase family. DDX24/MAK5 subfamily. As to quaternary structure, interacts with FADD. Interacts with RIPK1; this interaction disrupts RLR signaling activation of IFN-dependent transcription factor IRF7. Interacts with NIP7. Interacts with EP300; this interaction prevents TP53 acetylation mediated by EP300. In terms of assembly, (Microbial infection) Interacts with HIV-1 virus Gag and Rev proteins. In terms of processing, ubiquitinated by MDM2 without targeting DDX24 for proteasomal degradation. Instead, polyubiquitinated DDX24 promotes interaction with NIP7, a component of pre-rRNP processing complex, and associates with pre-rRNA molecules and pre-ribosomal particles. In terms of tissue distribution, ubiquitous. Most abundant in heart and brain, but with lowest levels in thymus and small intestine.

It localises to the cytoplasm. The protein resides in the nucleus. The catalysed reaction is ATP + H2O = ADP + phosphate + H(+). In terms of biological role, ATP-dependent RNA helicase that plays a role in various aspects of RNA metabolism including pre-mRNA splicing and is thereby involved in different biological processes such as cell cycle regulation or innate immunity. Plays an inhibitory role in TP53 transcriptional activity and subsequently in TP53 controlled cell growth arrest and senescence by inhibiting its EP300 mediated acetylation. Negatively regulates cytosolic RNA-mediated innate immune signaling at least in part by affecting RIPK1/IRF7 interactions. Alternatively, possesses antiviral activity by recognizing gammaherpesvirus transcripts in the context of lytic reactivation. Plays an essential role in cell cycle regulation in vascular smooth muscle cells by interacting with and regulating FANCA (Fanconi anemia complementation group A) mRNA. (Microbial infection) Plays a positive role in HIV-1 infection by promoting Rev-dependent nuclear export of viral RNAs and their packaging into virus particles. This Homo sapiens (Human) protein is ATP-dependent RNA helicase DDX24 (DDX24).